A 94-amino-acid polypeptide reads, in one-letter code: MAGPKRFNNKDKRPKRPAQNLLFKRKRFCRFTVTGVEEIDYKDIDTLRDFIAENGKIIPARLTGTRAIFQRQLNTAIKRARFLAMLPYSDQHKI.

It belongs to the bacterial ribosomal protein bS18 family. Part of the 30S ribosomal subunit. Forms a tight heterodimer with protein bS6.

Functionally, binds as a heterodimer with protein bS6 to the central domain of the 16S rRNA, where it helps stabilize the platform of the 30S subunit. In Albidiferax ferrireducens (strain ATCC BAA-621 / DSM 15236 / T118) (Rhodoferax ferrireducens), this protein is Small ribosomal subunit protein bS18.